The sequence spans 274 residues: Diaminopimelate epimerase (274 aa).

Asn-11, Gln-44, and Asn-64 together coordinate substrate. The active-site Proton donor is Cys-73. Substrate-binding positions include 74-75, Asn-157, Asn-190, and 208-209; these read GN and ER. Cys-217 (proton acceptor) is an active-site residue. 218 to 219 lines the substrate pocket; the sequence is GS.

It belongs to the diaminopimelate epimerase family. As to quaternary structure, homodimer.

Its subcellular location is the cytoplasm. It catalyses the reaction (2S,6S)-2,6-diaminopimelate = meso-2,6-diaminopimelate. It functions in the pathway amino-acid biosynthesis; L-lysine biosynthesis via DAP pathway; DL-2,6-diaminopimelate from LL-2,6-diaminopimelate: step 1/1. Its function is as follows. Catalyzes the stereoinversion of LL-2,6-diaminopimelate (L,L-DAP) to meso-diaminopimelate (meso-DAP), a precursor of L-lysine and an essential component of the bacterial peptidoglycan. The sequence is that of Diaminopimelate epimerase from Shigella boydii serotype 18 (strain CDC 3083-94 / BS512).